Reading from the N-terminus, the 111-residue chain is UPF0060 membrane protein Aave_2845 (111 aa).

The next 4 helical transmembrane spans lie at 7–27 (FLLYAVTALAEIAGCYLPWLW), 33–53 (SAWLLVPGAACLALFAWLLTL), 63–83 (AAYGGVYVAVALGWLWAVDGI), and 90–110 (LAGAAVTLAGMAIIAFAPRGA).

It belongs to the UPF0060 family.

The protein localises to the cell inner membrane. In Paracidovorax citrulli (strain AAC00-1) (Acidovorax citrulli), this protein is UPF0060 membrane protein Aave_2845.